The primary structure comprises 813 residues: Leucine--tRNA ligase (813 aa).

The short motif at 41-51 (PYPSGTLHMGH) is the 'HIGH' region element. The 'KMSKS' region motif lies at 575 to 579 (KMSKS). Lys-578 provides a ligand contact to ATP.

This sequence belongs to the class-I aminoacyl-tRNA synthetase family.

The protein localises to the cytoplasm. The catalysed reaction is tRNA(Leu) + L-leucine + ATP = L-leucyl-tRNA(Leu) + AMP + diphosphate. The chain is Leucine--tRNA ligase from Francisella tularensis subsp. tularensis (strain FSC 198).